Consider the following 229-residue polypeptide: uncharacterized protein (229 aa).

A run of 7 helical transmembrane segments spans residues 1–21 (MFGT…GGIF), 32–52 (ILMQ…ITQH), 58–78 (YPIL…IINL), 100–120 (TAVL…EAAL), 139–159 (IVLA…LFSW), 178–198 (LINE…LSIL), and 206–226 (LNLL…HAFG).

It localises to the cell membrane. This is an uncharacterized protein from Bacillus subtilis (strain 168).